The following is a 668-amino-acid chain: Chitin synthase 8 (668 aa).

Residues 1-26 show a composition bias toward polar residues; sequence MTSRMPTSGHRTSSSSSERGNMSVQQ. The tract at residues 1–62 is disordered; sequence MTSRMPTSGH…PAPLRPGWTL (62 aa). 3 N-linked (GlcNAc...) asparagine glycosylation sites follow: asparagine 21, asparagine 98, and asparagine 101. A run of 2 helical transmembrane segments spans residues 136–156 and 162–182; these read WSLIIGLAGINGALIYIGWKY and FFLVLLSSNTVLQSFMCICII. N-linked (GlcNAc...) asparagine glycans are attached at residues asparagine 216 and asparagine 476. 4 consecutive transmembrane segments (helical) span residues 522–542, 548–568, 583–603, and 615–635; these read WALGSISNEFVMIFRPGIILI, LIAVITWAITPFIIAAFVELL, VFLGLICVLFFRYLYSFCIGF, and YFAGYVMHLFTSPFMNIIILV.

This sequence belongs to the chitin synthase family. Class VIII subfamily.

It is found in the cell membrane. Its subcellular location is the cell septum. It carries out the reaction [(1-&gt;4)-N-acetyl-beta-D-glucosaminyl](n) + UDP-N-acetyl-alpha-D-glucosamine = [(1-&gt;4)-N-acetyl-beta-D-glucosaminyl](n+1) + UDP + H(+). Polymerizes chitin, a structural polymer of the cell wall and septum, by transferring the sugar moiety of UDP-GlcNAc to the non-reducing end of the growing chitin polymer. Participated in the development of cell wall and plays a critical role in fungal response to environmental stresses. Necessary for pathogenicity and deoxinivalenol (DON) production. The protein is Chitin synthase 8 of Gibberella zeae (strain ATCC MYA-4620 / CBS 123657 / FGSC 9075 / NRRL 31084 / PH-1) (Wheat head blight fungus).